Here is a 450-residue protein sequence, read N- to C-terminus: UDP-N-acetylmuramoylalanine--D-glutamate ligase (450 aa).

ATP is bound at residue 119–125 (GSNGKTT).

This sequence belongs to the MurCDEF family.

The protein resides in the cytoplasm. It catalyses the reaction UDP-N-acetyl-alpha-D-muramoyl-L-alanine + D-glutamate + ATP = UDP-N-acetyl-alpha-D-muramoyl-L-alanyl-D-glutamate + ADP + phosphate + H(+). The protein operates within cell wall biogenesis; peptidoglycan biosynthesis. In terms of biological role, cell wall formation. Catalyzes the addition of glutamate to the nucleotide precursor UDP-N-acetylmuramoyl-L-alanine (UMA). The protein is UDP-N-acetylmuramoylalanine--D-glutamate ligase of Streptococcus pneumoniae (strain Hungary19A-6).